We begin with the raw amino-acid sequence, 188 residues long: Large ribosomal subunit protein uL10 (188 aa).

This sequence belongs to the universal ribosomal protein uL10 family. In terms of assembly, part of the ribosomal stalk of the 50S ribosomal subunit. The N-terminus interacts with L11 and the large rRNA to form the base of the stalk. The C-terminus forms an elongated spine to which L12 dimers bind in a sequential fashion forming a multimeric L10(L12)X complex.

Functionally, forms part of the ribosomal stalk, playing a central role in the interaction of the ribosome with GTP-bound translation factors. The polypeptide is Large ribosomal subunit protein uL10 (Crocosphaera subtropica (strain ATCC 51142 / BH68) (Cyanothece sp. (strain ATCC 51142))).